Consider the following 665-residue polypeptide: Prelamin-A/C (665 aa).

The residue at position 1 (Met-1) is an N-acetylmethionine. Positions 1–27 (METPSQRRPTRSGAQASSTPLSPTRIT) are disordered. The interval 1–33 (METPSQRRPTRSGAQASSTPLSPTRITRLQEKE) is head. The tract at residues 1–130 (METPSQRRPT…TKKEGDLLAA (130 aa)) is interaction with MLIP. Thr-3 bears the Phosphothreonine mark. Ser-5 bears the Phosphoserine mark. A Phosphothreonine modification is found at Thr-10. A phosphoserine mark is found at Ser-12 and Ser-18. Thr-19 carries the post-translational modification Phosphothreonine. At Ser-22 the chain carries Phosphoserine. The IF rod domain maps to 31–387 (EKEDLQELND…KLLEGEEERL (357 aa)). Lys-32 carries the N6-acetyllysine; alternate modification. Lys-32 carries the N6-succinyllysine; alternate modification. A Glycyl lysine isopeptide (Lys-Gly) (interchain with G-Cter in SUMO2); alternate cross-link involves residue Lys-32. Residues 34-70 (DLQELNDRLAVYIDRVRSLETENAGLRLRITESEEVV) form a coil 1A region. Ser-51, Ser-66, and Ser-71 each carry phosphoserine. The interval 71–80 (SREVSGIKAA) is linker 1. An N6-acetyllysine mark is found at Lys-78 and Lys-97. The tract at residues 81–218 (YEAELGDARK…NIYSEELRET (138 aa)) is coil 1B. A Glycyl lysine isopeptide (Lys-Gly) (interchain with G-Cter in SUMO2) cross-link involves residue Lys-97. Ser-107 bears the Phosphoserine mark. 6 positions are modified to N6-acetyllysine: Lys-108, Lys-114, Lys-123, Lys-135, Lys-144, and Lys-155. Lys-171 carries the post-translational modification N6-acetyllysine; alternate. Residue Lys-171 is modified to N6-succinyllysine; alternate. Lys-171 participates in a covalent cross-link: Glycyl lysine isopeptide (Lys-Gly) (interchain with G-Cter in SUMO2); alternate. N6-acetyllysine occurs at positions 180, 201, and 208. Lys-201 is covalently cross-linked (Glycyl lysine isopeptide (Lys-Gly) (interchain with G-Cter in SUMO2); alternate). Lys-201 participates in a covalent cross-link: Glycyl lysine isopeptide (Lys-Gly) (interchain with G-Cter in SUMO); alternate. Lys-208 is covalently cross-linked (Glycyl lysine isopeptide (Lys-Gly) (interchain with G-Cter in SUMO2)). Position 212 is a phosphoserine (Ser-212). Glycyl lysine isopeptide (Lys-Gly) (interchain with G-Cter in SUMO2) cross-links involve residues Lys-219 and Lys-233. The tract at residues 219-242 (KRRHETRLVEIDNGKQREFESRLA) is linker 2. N6-acetyllysine is present on residues Lys-233, Lys-260, Lys-265, and Lys-270. The coil 2 stretch occupies residues 243-383 (DALQELRAQH…HAYRKLLEGE (141 aa)). Residue Lys-260 forms a Glycyl lysine isopeptide (Lys-Gly) (interchain with G-Cter in SUMO2); alternate linkage. Residue Lys-270 forms a Glycyl lysine isopeptide (Lys-Gly) (interchain with G-Cter in SUMO2); alternate linkage. Phosphoserine is present on residues Ser-277, Ser-282, Ser-301, and Ser-307. Lys-311 participates in a covalent cross-link: Glycyl lysine isopeptide (Lys-Gly) (interchain with G-Cter in SUMO2); alternate. Residues Lys-311, Lys-316, and Lys-341 each carry the N6-acetyllysine modification. Residues Lys-366 and Lys-378 each participate in a glycyl lysine isopeptide (Lys-Gly) (interchain with G-Cter in SUMO2) cross-link. Residues 384-442 (EERLRLSPSPTSQRSRGRASSHSSQSQGGGSVTKKRKLESSESRSSFSQHARTSGRVAV) form a disordered region. The tract at residues 384–665 (EERLRLSPSP…TQSSQNCSIM (282 aa)) is tail. Ser-390, Ser-392, Ser-395, Ser-398, Ser-403, Ser-404, Ser-406, Ser-407, Ser-409, and Ser-414 each carry phosphoserine. The segment covering 395-409 (SQRSRGRASSHSSQS) has biased composition (low complexity). Thr-416 is subject to Phosphothreonine. Position 417 is an N6-acetyllysine (Lys-417). Residues Lys-417 and Lys-420 each participate in a glycyl lysine isopeptide (Lys-Gly) (interchain with G-Cter in SUMO2) cross-link. Positions 417–422 (KKRKLE) match the Nuclear localization signal motif. 4 positions are modified to phosphoserine: Ser-423, Ser-426, Ser-429, and Ser-431. The 118-residue stretch at 428–545 (SSFSQHARTS…EEVAMRKLVR (118 aa)) folds into the LTD domain. Residue Lys-450 forms a Glycyl lysine isopeptide (Lys-Gly) (interchain with G-Cter in SUMO2); alternate linkage. Residues Lys-450 and Lys-457 each carry the N6-acetyllysine modification. 2 positions are modified to phosphoserine: Ser-458 and Ser-463. Glycyl lysine isopeptide (Lys-Gly) (interchain with G-Cter in SUMO2) cross-links involve residues Lys-470 and Lys-486. Residue Lys-486 is modified to N6-acetyllysine. Thr-496 bears the Phosphothreonine mark. Ser-500 carries the phosphoserine modification. Thr-505 and Thr-510 each carry phosphothreonine. Position 546 is a phosphoserine (Ser-546). Phosphothreonine is present on Thr-548. Over residues 552–561 (DNDDEEEDGD) the composition is skewed to acidic residues. The disordered stretch occupies residues 552–577 (DNDDEEEDGDELLHHHRGSHCSSSGD). Phosphoserine occurs at positions 570 and 573. A Glycyl lysine isopeptide (Lys-Gly) (interchain with G-Cter in SUMO2); alternate cross-link involves residue Lys-599. Residue Lys-599 forms a Glycyl lysine isopeptide (Lys-Gly) (interchain with G-Cter in SUMO1); alternate linkage. Phosphoserine occurs at positions 613, 614, 617, and 620. O-linked (GlcNAc) serine glycans are attached at residues Ser-626 and Ser-629. Ser-629, Ser-633, Ser-637, and Ser-653 each carry phosphoserine. A propeptide spans 648-662 (LLGNSSPRTQSSQNC) (removed in Lamin-A/C form). Position 662 is a cysteine methyl ester (Cys-662). Cys-662 is lipidated: S-farnesyl cysteine. A propeptide spans 663-665 (SIM) (removed in Prelamin-A/C form and in Lamin-A/C form).

The protein belongs to the intermediate filament family. As to quaternary structure, homodimer of lamin A and lamin C. Lamin dimers then assemble into dimeric head-to-tail polymers. Ultimately, two head-to-tail polymers assemble laterally into a protofilament with a uniformly shaped rod of 3.5 nm in diameter. Interacts with lamin-associated polypeptides IA, IB and TMPO-alpha, RB1 and with emerin. Interacts with SREBF1, SREBF2, SUN2 and TMEM43. Interacts with TMEM201. Proteolytically processed isoform A interacts with NARF. Interacts with SUN1. Interacts with MLIP. Interacts with DMPK; may regulate nuclear envelope stability. Interacts with SUV39H1; the interaction increases stability of SUV39H1. Interacts with SYNE2. Interacts with ITSN1 isoform 2. Interacts with IFFO1; enables the formation of an interior nucleoskeleton that is recruited to DNA double-strand breaks. In terms of assembly, interacts with EMD. Interacts (via C-terminus) with LEMD2 (via N-terminus) (in vitro). Post-translationally, proteolytic cleavage of the C-terminal of 18 residues of prelamin-A/C results in the production of lamin-A/C. The prelamin-A/C maturation pathway includes farnesylation of CAAX motif by protein farnesyltransferase (FNTA and FNTB), removal of the last three amino acids (-AAX) by RCE1/FACE2 and/or ZMPSTE24, methylation of the C-terminal cysteine by ICMT and endoproteolytic removal of the last 15 C-terminal amino acids by ZMPSTE24. Proteolytic cleavage requires prior farnesylation and methylation, and absence of these blocks cleavage. Farnesylation of prelamin-A/C facilitates nuclear envelope targeting. In terms of processing, phosphorylation plays a key role in lamin organization, subcellular localization and nuclear envelope disintegration. Phosphorylation by CDK1 at Ser-22 and Ser-392 at the onset of mitosis drives lamin disassembly and nuclear envelope breakdown. Phosphorylation at Ser-22 and Ser-392 during interphase promotes localization to the nucleoplasm and regulates lamina assembly. Phosphorylation at Ser-22, Ser-392 and Ser-629 during interphase causes redistribution between the nucleus and the cytoplasm. Phosphorylation at Ser-22 by CDK1 regulates matrix stiffness. Phosphorylation status of Ser-22 determines its localization between double-strand break (DSB) sites and the nuclear matrix. Phosphorylated by ATR at Ser-282 in response to DNA damage, leading to lamin disassembly and nuclear envelope rupture. Phosphorylation also regulates stability in micronuclei arising from genome instability: phosphorylation at Ser-395 by ATR in response to genome instability and double-stranded DNA breaks primes LMNA for subsequent phosphorylation at Ser-392 by CDK1 and micronuclei envelope rupture. The rupture of micronuclear envelope triggers the cGAS-STING pathway thereby activating the type I interferon response and innate immunity. Post-translationally, acetylation by KAT8 is required for nuclear architecture. Sumoylation is necessary for the localization to the nuclear envelope.

It localises to the nucleus lamina. The protein localises to the nucleus envelope. It is found in the nucleus. Its subcellular location is the nucleoplasm. The protein resides in the nucleus matrix. Its function is as follows. Lamins are intermediate filament proteins that assemble into a filamentous meshwork, and which constitute the major components of the nuclear lamina, a fibrous layer on the nucleoplasmic side of the inner nuclear membrane. Lamins provide a framework for the nuclear envelope, bridging the nuclear envelope and chromatin, thereby playing an important role in nuclear assembly, chromatin organization, nuclear membrane and telomere dynamics. Lamin A and C also regulate matrix stiffness by conferring nuclear mechanical properties. The structural integrity of the lamina is strictly controlled by the cell cycle, as seen by the disintegration and formation of the nuclear envelope in prophase and telophase, respectively. Lamin A and C are present in equal amounts in the lamina of mammals. Also invoved in DNA repair: recruited by DNA repair proteins XRCC4 and IFFO1 to the DNA double-strand breaks (DSBs) to prevent chromosome translocation by immobilizing broken DNA ends. Required for normal development of peripheral nervous system and skeletal muscle and for muscle satellite cell proliferation. Required for osteoblastogenesis and bone formation. Also prevents fat infiltration of muscle and bone marrow, helping to maintain the volume and strength of skeletal muscle and bone. Required for cardiac homeostasis. In terms of biological role, prelamin-A/C can accelerate smooth muscle cell senescence. It acts to disrupt mitosis and induce DNA damage in vascular smooth muscle cells (VSMCs), leading to mitotic failure, genomic instability, and premature senescence. This chain is Prelamin-A/C (Lmna), found in Rattus norvegicus (Rat).